Reading from the N-terminus, the 233-residue chain is Tropomyosin (233 aa).

Residues 6 to 222 (FDTVNEKYQE…KERYKAISDE (217 aa)) adopt a coiled-coil conformation. The interval 48–88 (MERSEERLQTATEKLEEASKAADESERNRKVLENLNNASEE) is disordered. A compositionally biased stretch (basic and acidic residues) spans 51–79 (SEERLQTATEKLEEASKAADESERNRKVL).

This sequence belongs to the tropomyosin family. Homodimer.

Its function is as follows. Tropomyosin, in association with the troponin complex, plays a central role in the calcium dependent regulation of muscle contraction. In Magallana gigas (Pacific oyster), this protein is Tropomyosin.